The following is a 61-amino-acid chain: Rubredoxin 3 (61 aa).

Residues 1 to 53 (MSSYRCPVCEYVYDESKGAPREGFPAGTPWDAVPDDWCCPDCGVREKLDFEPM) form the Rubredoxin-like domain. Residues Cys6, Cys9, Cys39, and Cys42 each coordinate Fe cation.

The protein belongs to the rubredoxin family. Fe(3+) is required as a cofactor.

In terms of biological role, involved in the hydrocarbon hydroxylating system, which transfers electrons from NADH to rubredoxin reductase and then through rubredoxin to alkane 1 monooxygenase. The protein is Rubredoxin 3 (rubA3) of Rhodococcus erythropolis (Arthrobacter picolinophilus).